A 218-amino-acid chain; its full sequence is uncharacterized protein (218 aa).

This is an uncharacterized protein from Acholeplasma phage L2 (Bacteriophage L2).